We begin with the raw amino-acid sequence, 198 residues long: GTP cyclohydrolase-2 (198 aa).

49–53 (RVHSE) contacts GTP. The Zn(2+) site is built by cysteine 54, cysteine 65, and cysteine 67. Residues glutamine 70, 92 to 94 (EGR), and threonine 114 contribute to the GTP site. Aspartate 126 serves as the catalytic Proton acceptor. The active-site Nucleophile is the arginine 128. GTP contacts are provided by threonine 149 and lysine 154.

This sequence belongs to the GTP cyclohydrolase II family. Homodimer. Requires Zn(2+) as cofactor.

It catalyses the reaction GTP + 4 H2O = 2,5-diamino-6-hydroxy-4-(5-phosphoribosylamino)-pyrimidine + formate + 2 phosphate + 3 H(+). The protein operates within cofactor biosynthesis; riboflavin biosynthesis; 5-amino-6-(D-ribitylamino)uracil from GTP: step 1/4. In terms of biological role, catalyzes the conversion of GTP to 2,5-diamino-6-ribosylamino-4(3H)-pyrimidinone 5'-phosphate (DARP), formate and pyrophosphate. The sequence is that of GTP cyclohydrolase-2 from Escherichia fergusonii (strain ATCC 35469 / DSM 13698 / CCUG 18766 / IAM 14443 / JCM 21226 / LMG 7866 / NBRC 102419 / NCTC 12128 / CDC 0568-73).